A 234-amino-acid chain; its full sequence is MDNTLKHLAIIMDGNGRWAKLKNKARAYGHKKGVKTLKDITIWCANHKLECLTLYAFSTENWKRPKSEVDFLMKMLKKYLKDERSTYLNNNIRFRAIGDLEGFSKELRDTILQLENDTRHFKDFTQVLALNYGSKNELSRAFKSLLESPPSHINLLESLENEISNRLDTHDLPEVDLLLRTGGEMRLSNFLLWQSSYAELFFTPILWPDFTPKDLENIISDFYKRVRKFGELKC.

Aspartate 13 is an active-site residue. Aspartate 13 contacts Mg(2+). Substrate is bound by residues 14–17 (GNGR), tryptophan 18, arginine 26, histidine 30, and 58–60 (STE). Asparagine 61 serves as the catalytic Proton acceptor. Substrate contacts are provided by residues tryptophan 62, arginine 64, arginine 180, and 186–188 (RLS). Glutamate 199 provides a ligand contact to Mg(2+).

It belongs to the UPP synthase family. As to quaternary structure, homodimer. Mg(2+) serves as cofactor.

In terms of biological role, catalyzes the condensation of isopentenyl diphosphate (IPP) with allylic pyrophosphates generating different type of terpenoids. The protein is Isoprenyl transferase (uppS) of Helicobacter pylori (strain ATCC 700392 / 26695) (Campylobacter pylori).